Consider the following 445-residue polypeptide: Methionine aminopeptidase 2 (445 aa).

The segment at M1–R80 is disordered. Over residues A57 to T71 the composition is skewed to basic residues. H195 is a substrate binding site. Residues D215, D226, and H295 each coordinate a divalent metal cation. H303 serves as a coordination point for substrate. A divalent metal cation contacts are provided by E331 and E426.

Belongs to the peptidase M24A family. Methionine aminopeptidase eukaryotic type 2 subfamily. Requires Co(2+) as cofactor. The cofactor is Zn(2+). It depends on Mn(2+) as a cofactor. Fe(2+) is required as a cofactor.

Its subcellular location is the cytoplasm. It catalyses the reaction Release of N-terminal amino acids, preferentially methionine, from peptides and arylamides.. Functionally, cotranslationally removes the N-terminal methionine from nascent proteins. The N-terminal methionine is often cleaved when the second residue in the primary sequence is small and uncharged (Met-Ala-, Cys, Gly, Pro, Ser, Thr, or Val). This Paracoccidioides brasiliensis (strain Pb18) protein is Methionine aminopeptidase 2.